Reading from the N-terminus, the 276-residue chain is Dermonecrotic toxin LvSicTox-alphaII1 (276 aa).

The active site involves His-5. Mg(2+)-binding residues include Glu-25 and Asp-27. Residue His-41 is the Nucleophile of the active site. 2 disulfides stabilise this stretch: Cys-45–Cys-51 and Cys-47–Cys-193. Asp-85 contacts Mg(2+).

This sequence belongs to the arthropod phospholipase D family. Class II subfamily. The cofactor is Mg(2+). As to expression, expressed by the venom gland.

The protein resides in the secreted. The enzyme catalyses an N-(acyl)-sphingosylphosphocholine = an N-(acyl)-sphingosyl-1,3-cyclic phosphate + choline. The catalysed reaction is an N-(acyl)-sphingosylphosphoethanolamine = an N-(acyl)-sphingosyl-1,3-cyclic phosphate + ethanolamine. It carries out the reaction a 1-acyl-sn-glycero-3-phosphocholine = a 1-acyl-sn-glycero-2,3-cyclic phosphate + choline. It catalyses the reaction a 1-acyl-sn-glycero-3-phosphoethanolamine = a 1-acyl-sn-glycero-2,3-cyclic phosphate + ethanolamine. Its function is as follows. Dermonecrotic toxins cleave the phosphodiester linkage between the phosphate and headgroup of certain phospholipids (sphingolipid and lysolipid substrates), forming an alcohol (often choline) and a cyclic phosphate. This toxin acts on sphingomyelin (SM). It may also act on ceramide phosphoethanolamine (CPE), lysophosphatidylcholine (LPC) and lysophosphatidylethanolamine (LPE), but not on lysophosphatidylserine (LPS), and lysophosphatidylglycerol (LPG). It acts by transphosphatidylation, releasing exclusively cyclic phosphate products as second products. Induces dermonecrosis, hemolysis, increased vascular permeability, edema, inflammatory response, and platelet aggregation. This Loxosceles variegata (Recluse spider) protein is Dermonecrotic toxin LvSicTox-alphaII1.